A 358-amino-acid polypeptide reads, in one-letter code: tRNA-specific 2-thiouridylase MnmA (358 aa).

Residues 6–13 (ALSGGVDS) and methionine 32 contribute to the ATP site. Cysteine 103 functions as the Nucleophile in the catalytic mechanism. The cysteines at positions 103 and 201 are disulfide-linked. Glycine 127 contacts ATP. The interaction with tRNA stretch occupies residues 151–153 (KDQ). Cysteine 201 acts as the Cysteine persulfide intermediate in catalysis.

This sequence belongs to the MnmA/TRMU family.

It localises to the cytoplasm. It catalyses the reaction S-sulfanyl-L-cysteinyl-[protein] + uridine(34) in tRNA + AH2 + ATP = 2-thiouridine(34) in tRNA + L-cysteinyl-[protein] + A + AMP + diphosphate + H(+). In terms of biological role, catalyzes the 2-thiolation of uridine at the wobble position (U34) of tRNA, leading to the formation of s(2)U34. The polypeptide is tRNA-specific 2-thiouridylase MnmA (Thermotoga sp. (strain RQ2)).